A 285-amino-acid polypeptide reads, in one-letter code: MSEHNVYGAAQPAQPAQPAQPRTRIRTHHLQKMKAEGHKWAMLTAYDYSTARIFDEAGIPVLLVGDSAANVVYGYDTTVPVSIDELIPLVRGVVRGAPHALVVADLPFGSYEAGPAAALAAATRFMKEGGAHAVKLEGGERVAEQIAHLTAAGIPVMAHIGFTPQSVNSLGGFRVQGRGDAAEQTIADAIAVAEAGAFSVVMEMVPAGLATQITGKLTIPTIGIGAGPNCDGQVLVWQDMAGMSSGKSARFVKRFADIGGELRRAATQYAHEVAAGVFPADEHCF.

The segment at 1-23 is disordered; the sequence is MSEHNVYGAAQPAQPAQPAQPRT. Positions 9–21 are enriched in low complexity; it reads AAQPAQPAQPAQP. The Mg(2+) site is built by D66 and D105. 3-methyl-2-oxobutanoate contacts are provided by residues 66–67, D105, and K135; that span reads DS. Position 137 (E137) interacts with Mg(2+). Residue E203 is the Proton acceptor of the active site.

This sequence belongs to the PanB family. As to quaternary structure, homodecamer; pentamer of dimers. It depends on Mg(2+) as a cofactor.

The protein localises to the cytoplasm. It catalyses the reaction 3-methyl-2-oxobutanoate + (6R)-5,10-methylene-5,6,7,8-tetrahydrofolate + H2O = 2-dehydropantoate + (6S)-5,6,7,8-tetrahydrofolate. The protein operates within cofactor biosynthesis; (R)-pantothenate biosynthesis; (R)-pantoate from 3-methyl-2-oxobutanoate: step 1/2. Catalyzes the reversible reaction in which hydroxymethyl group from 5,10-methylenetetrahydrofolate is transferred onto alpha-ketoisovalerate to form ketopantoate. The protein is 3-methyl-2-oxobutanoate hydroxymethyltransferase of Mycobacterium avium (strain 104).